The following is a 236-amino-acid chain: Adenylate dimethylallyltransferase (236 aa).

This sequence belongs to the isopentenyl transferase family.

It catalyses the reaction dimethylallyl diphosphate + AMP = N(6)-(dimethylallyl)adenosine 5'-phosphate + diphosphate. Its function is as follows. Transfers dimethylallyl groups to AMP as part of the biosynthesis of cytokinin phytohormones. This is Adenylate dimethylallyltransferase (ipt) from Pantoea agglomerans pv. gypsophilae (Erwinia herbicola).